The following is a 190-amino-acid chain: Hypoxanthine/guanine phosphoribosyltransferase (190 aa).

It belongs to the purine/pyrimidine phosphoribosyltransferase family. Archaeal HPRT subfamily. As to quaternary structure, homodimer.

Its subcellular location is the cytoplasm. It catalyses the reaction IMP + diphosphate = hypoxanthine + 5-phospho-alpha-D-ribose 1-diphosphate. It carries out the reaction GMP + diphosphate = guanine + 5-phospho-alpha-D-ribose 1-diphosphate. Its pathway is purine metabolism; IMP biosynthesis via salvage pathway; IMP from hypoxanthine: step 1/1. Its function is as follows. Catalyzes a salvage reaction resulting in the formation of IMP that is energically less costly than de novo synthesis. The sequence is that of Hypoxanthine/guanine phosphoribosyltransferase from Methanohalobium evestigatum (strain ATCC BAA-1072 / DSM 3721 / NBRC 107634 / OCM 161 / Z-7303).